A 396-amino-acid chain; its full sequence is Tryptophan synthase beta chain (396 aa).

Lys-90 carries the N6-(pyridoxal phosphate)lysine modification.

The protein belongs to the TrpB family. Tetramer of two alpha and two beta chains. Requires pyridoxal 5'-phosphate as cofactor.

It carries out the reaction (1S,2R)-1-C-(indol-3-yl)glycerol 3-phosphate + L-serine = D-glyceraldehyde 3-phosphate + L-tryptophan + H2O. Its pathway is amino-acid biosynthesis; L-tryptophan biosynthesis; L-tryptophan from chorismate: step 5/5. Its function is as follows. The beta subunit is responsible for the synthesis of L-tryptophan from indole and L-serine. This is Tryptophan synthase beta chain from Clostridium kluyveri (strain NBRC 12016).